The chain runs to 284 residues: Diaminopimelate epimerase (284 aa).

Residues Asn-13 and Asn-70 each contribute to the substrate site. Catalysis depends on Cys-79, which acts as the Proton donor. Substrate-binding positions include 80–81, Asn-167, Asn-200, and 218–219; these read GN and ER. Catalysis depends on Cys-227, which acts as the Proton acceptor. 228–229 contacts substrate; sequence GT.

Belongs to the diaminopimelate epimerase family. In terms of assembly, homodimer.

Its subcellular location is the cytoplasm. The catalysed reaction is (2S,6S)-2,6-diaminopimelate = meso-2,6-diaminopimelate. It participates in amino-acid biosynthesis; L-lysine biosynthesis via DAP pathway; DL-2,6-diaminopimelate from LL-2,6-diaminopimelate: step 1/1. In terms of biological role, catalyzes the stereoinversion of LL-2,6-diaminopimelate (L,L-DAP) to meso-diaminopimelate (meso-DAP), a precursor of L-lysine and an essential component of the bacterial peptidoglycan. This Prochlorococcus marinus (strain NATL1A) protein is Diaminopimelate epimerase.